A 709-amino-acid polypeptide reads, in one-letter code: MAREFSLANTRNIGIMAHVDAGKTTTTERVLYYTGKIHKIGETHEGASQMDWMEQEQERGITITSAATTAEWKGNRVNIIDTPGHVDFTIEVQRSLRVLDGAVTVLDAQSGVEPQTETVWRQATEYGVPRIVFANKMDKIGADFYYSLSTLGDRLGANAHPIQIPIGAEDDFIGIIDLVTMKSEIYTNDLGTDIKETVVGSDEFNAELAALDFNAEEYTELANEWREKLIEAIADFDEDIMEKYFAGEEIPEAELKAAIRKATINVDFYPMLAGSAFKNKGVQMMLDAVIDYLPSPLDIPAIQGVNPDTDEEDERPASDEEPFAALAFKIMTDPFVGRLSFFRVYSGTLDAGSYVLNTSKGKRERIGRILQMHANTRKEIQTVYAGDIAAAVGLKNTTTGDSLTDEKAKIILESIEVPEPVIQLMVEPKTKADQDKMGVALQKLAEEDPTFRVETNPETGETVISGMGELHLDVLVDRMKREFKVEANVGAPQVAYRETFRAGTSARGFFKRQSGGKGQYGDVWIEFTPNEEGAGFEFENAIVGGVVPREFVPAVEKGLVETMANGVLAGYPMVDIKAKLYDGSYHDVDSSETAFKVAASLAMKEAAKTAKPAILEPMMKVTITVPEENLGDIMGHVTARRGQVNSMEAHGKSQIVNAFVPLAEMFGYATTLRSSTQGRGTFMMVFDHYSDVPKSVQEEIIAKNGRNAD.

The tr-type G domain occupies alanine 8 to leucine 297. GTP-binding positions include alanine 17–threonine 24, aspartate 81–histidine 85, and asparagine 135–aspartate 138.

This sequence belongs to the TRAFAC class translation factor GTPase superfamily. Classic translation factor GTPase family. EF-G/EF-2 subfamily.

The protein localises to the cytoplasm. Functionally, catalyzes the GTP-dependent ribosomal translocation step during translation elongation. During this step, the ribosome changes from the pre-translocational (PRE) to the post-translocational (POST) state as the newly formed A-site-bound peptidyl-tRNA and P-site-bound deacylated tRNA move to the P and E sites, respectively. Catalyzes the coordinated movement of the two tRNA molecules, the mRNA and conformational changes in the ribosome. This is Elongation factor G from Lactococcus lactis subsp. lactis (strain IL1403) (Streptococcus lactis).